A 405-amino-acid chain; its full sequence is Diaminopimelate decarboxylase (405 aa).

Lys46 is modified (N6-(pyridoxal phosphate)lysine). Residues Gly225 and Glu259–Arg262 contribute to the pyridoxal 5'-phosphate site. Substrate contacts are provided by Arg262, Arg298, and Tyr302. The active-site Proton donor is the Cys329. Substrate contacts are provided by Glu330 and Tyr358. Tyr358 provides a ligand contact to pyridoxal 5'-phosphate.

Belongs to the Orn/Lys/Arg decarboxylase class-II family. LysA subfamily. Homodimer. Pyridoxal 5'-phosphate is required as a cofactor.

The catalysed reaction is meso-2,6-diaminopimelate + H(+) = L-lysine + CO2. It functions in the pathway amino-acid biosynthesis; L-lysine biosynthesis via DAP pathway; L-lysine from DL-2,6-diaminopimelate: step 1/1. Its function is as follows. Specifically catalyzes the decarboxylation of meso-diaminopimelate (meso-DAP) to L-lysine. The polypeptide is Diaminopimelate decarboxylase (Helicobacter pylori (Campylobacter pylori)).